Consider the following 130-residue polypeptide: Small ribosomal subunit protein uS9 (130 aa).

Positions 98–130 (LKRAGLLTRDPRMKERKKPGLKKARRSPQFSKR) are disordered. Positions 111–130 (KERKKPGLKKARRSPQFSKR) are enriched in basic residues.

The protein belongs to the universal ribosomal protein uS9 family.

The sequence is that of Small ribosomal subunit protein uS9 from Staphylococcus haemolyticus (strain JCSC1435).